A 330-amino-acid polypeptide reads, in one-letter code: Olfactory receptor 1P1 (330 aa).

Topologically, residues 1–39 (MGLTQDFFPPTSELLEGGNQTSTFEFLLWGLSDQPQQQH) are extracellular. An N-linked (GlcNAc...) asparagine glycan is attached at Asn19. A helical membrane pass occupies residues 40 to 60 (IFFLLFLWMYVVTVAGNLLIV). The Cytoplasmic portion of the chain corresponds to 61–71 (LAIGTDTHLHT). Residues 72–92 (PMYFFLASLSCADIFSTSTTV) form a helical membrane-spanning segment. Residues 93 to 111 (PKALVNIQTQSRSISYAGC) lie on the Extracellular side of the membrane. A disulfide bridge links Cys111 with Cys192. A helical transmembrane segment spans residues 112 to 132 (LAQLYFFLTFGDMDIFLPATM). The Cytoplasmic portion of the chain corresponds to 133 to 137 (AYDRY). The helical transmembrane segment at 138 to 158 (VAICHLLHYMMIMSLHRCAFL) threads the bilayer. Residues 159–209 (VTACWTLTSLLAMTRTFLIFRLSLCSKILPGFFCDLGPLMKVSCSDAQVNE) are Extracellular-facing. A helical membrane pass occupies residues 210 to 230 (LVLLFLGGAVILIPFMLILVS). At 231-257 (YIRIVSAILRAPSAQGRRKAFSTCDSH) the chain is on the cytoplasmic side. The helical transmembrane segment at 258–278 (LVVVALFFGTVIRAYLCPSSS) threads the bilayer. Residues 279–286 (SSNSVKED) are Extracellular-facing. A helical membrane pass occupies residues 287 to 307 (TAAAVMYTVVTPLLNPFIYSM). Residues 308–330 (RNKDMKAAVVRLLKGRVSFSQGQ) are Cytoplasmic-facing.

The protein belongs to the G-protein coupled receptor 1 family.

The protein resides in the cell membrane. Its function is as follows. Odorant receptor. This chain is Olfactory receptor 1P1 (OR1P1), found in Homo sapiens (Human).